The following is a 432-amino-acid chain: Glutamyl-tRNA reductase (432 aa).

Substrate-binding positions include 49 to 52 (TCNR), S107, 112 to 114 (ETQ), and Q118. C50 (nucleophile) is an active-site residue. NADP(+) is bound at residue 186–191 (GAGEMG).

This sequence belongs to the glutamyl-tRNA reductase family. As to quaternary structure, homodimer.

It carries out the reaction (S)-4-amino-5-oxopentanoate + tRNA(Glu) + NADP(+) = L-glutamyl-tRNA(Glu) + NADPH + H(+). The protein operates within porphyrin-containing compound metabolism; protoporphyrin-IX biosynthesis; 5-aminolevulinate from L-glutamyl-tRNA(Glu): step 1/2. In terms of biological role, catalyzes the NADPH-dependent reduction of glutamyl-tRNA(Glu) to glutamate 1-semialdehyde (GSA). This is Glutamyl-tRNA reductase from Campylobacter jejuni subsp. doylei (strain ATCC BAA-1458 / RM4099 / 269.97).